A 58-amino-acid polypeptide reads, in one-letter code: Putative antitoxin VapB16 (58 aa).

In terms of biological role, putative antitoxin component of a possible type II toxin-antitoxin (TA) system. The cognate toxin is VapC16. In Mycobacterium tuberculosis (strain ATCC 25618 / H37Rv), this protein is Putative antitoxin VapB16 (vapB16).